The following is a 697-amino-acid chain: Elongation factor G (697 aa).

Residues 8 to 282 (ENTRNIGIMA…AIVDYMPSPV (275 aa)) enclose the tr-type G domain. GTP contacts are provided by residues 17 to 24 (AHIDAGKT), 81 to 85 (DTPGH), and 135 to 138 (NKMD).

This sequence belongs to the TRAFAC class translation factor GTPase superfamily. Classic translation factor GTPase family. EF-G/EF-2 subfamily.

It is found in the cytoplasm. In terms of biological role, catalyzes the GTP-dependent ribosomal translocation step during translation elongation. During this step, the ribosome changes from the pre-translocational (PRE) to the post-translocational (POST) state as the newly formed A-site-bound peptidyl-tRNA and P-site-bound deacylated tRNA move to the P and E sites, respectively. Catalyzes the coordinated movement of the two tRNA molecules, the mRNA and conformational changes in the ribosome. In Acetivibrio thermocellus (strain ATCC 27405 / DSM 1237 / JCM 9322 / NBRC 103400 / NCIMB 10682 / NRRL B-4536 / VPI 7372) (Clostridium thermocellum), this protein is Elongation factor G.